Reading from the N-terminus, the 62-residue chain is Chromatin protein Cren7 (62 aa).

It belongs to the Cren7 family. In terms of assembly, monomer. Post-translationally, methylated at multiple sites, to varying extents.

The protein resides in the chromosome. It localises to the cytoplasm. Its function is as follows. A chromatin protein, binds double-stranded DNA without sequence specificity. Constrains negative DNA supercoils. The polypeptide is Chromatin protein Cren7 (Staphylothermus marinus (strain ATCC 43588 / DSM 3639 / JCM 9404 / F1)).